The primary structure comprises 76 residues: MPKADIHPEWYPDAKVICNGEVVMTIGSTQPEINVEIWSGNHPFYTGTQKIIDTEGRVDRFLRKYGMLSNNSDDQK.

It belongs to the bacterial ribosomal protein bL31 family. Type A subfamily. As to quaternary structure, part of the 50S ribosomal subunit.

Its function is as follows. Binds the 23S rRNA. This is Large ribosomal subunit protein bL31 from Picosynechococcus sp. (strain ATCC 27264 / PCC 7002 / PR-6) (Agmenellum quadruplicatum).